Consider the following 130-residue polypeptide: Large ribosomal subunit protein eL32 (130 aa).

The protein belongs to the eukaryotic ribosomal protein eL32 family.

This chain is Large ribosomal subunit protein eL32 (rpl32e), found in Pyrococcus abyssi (strain GE5 / Orsay).